The chain runs to 204 residues: Recombination protein RecR (204 aa).

A C4-type zinc finger spans residues 63 to 78; the sequence is CRICCNVADSELCPIC. The region spanning 86–181 is the Toprim domain; it reads NKICVVEQPQ…KVTRLARGLP (96 aa).

Belongs to the RecR family.

May play a role in DNA repair. It seems to be involved in an RecBC-independent recombinational process of DNA repair. It may act with RecF and RecO. The protein is Recombination protein RecR of Dehalococcoides mccartyi (strain ATCC BAA-2100 / JCM 16839 / KCTC 5957 / BAV1).